The following is a 697-amino-acid chain: MARLVAVCRDGEEEFPFERRQIPLYIDDTLTMVMEFPDNVLNLDGHQNNGAQLKQFIQRHGMLKQQDLSIAMVVTSREVLSALSQLVPCVGCRRSVERLFSQLVESGNPALEPLTVGPKGVLSVTRSCMTDAKKLYTLFYVHGSKLNDMIDAIPKSKKNKRCQLHSLDTHKPKPLGGCWMDVWELMSQECRDEVVLIDSSCLLETLETYLRKHRFCTDCKNKVLRAYNILIGELDCSKEKGYCAALYEGLRCCPHERHIHVCCETDFIAHLLGRAEPEFAGGRRERHAKTIDIAQEEVLTCLGIHLYERLHRIWQKLRAEEQTWQMLFYLGVDALRKSFEMTVEKVQGISRLEQLCEEFSEEERVRELKQEKKRQKRKNRRKNKCVCDIPTPLQTADEKEVSQEKETDFIENSSCKACGSTEDGNTCVEVIVTNENTSCTCPSSGNLLGSPKIKKGLSPHCNGSDCGYSSSMEGSETGSREGSDVACTEGICNHDEHGDDSCVHHCEDKEDDGDSCVECWANSEENDTKGKNKKKKKKSKILKCDEHIQKLGSCITDPGNRETSGNTMHTVFHRDKTKDTHPESCCSSEKGGQPLPWFEHRKNVPQFAEPTETLFGPDSGKGAKSLVELLDESECTSDEEIFISQDEIQSFMANNQSFYSNREQYRQHLKEKFNKYCRLNDHKRPICSGWLTTAGAN.

At Ser360 the chain carries Phosphoserine.

In terms of assembly, interacts with GGN. In terms of tissue distribution, expressed in heart, brain, placenta, lung, liver, skeletal muscle, kidney and pancreas. Expressed more abundantly in heart, pancreas and skeletal muscle.

The protein localises to the cytoplasmic vesicle. Its function is as follows. May be involved in spermatogenesis. The polypeptide is Gametogenetin-binding protein 2 (GGNBP2) (Homo sapiens (Human)).